Reading from the N-terminus, the 281-residue chain is ATP phosphoribosyltransferase (281 aa).

It belongs to the ATP phosphoribosyltransferase family. Long subfamily. The cofactor is Mg(2+).

The protein localises to the cytoplasm. It carries out the reaction 1-(5-phospho-beta-D-ribosyl)-ATP + diphosphate = 5-phospho-alpha-D-ribose 1-diphosphate + ATP. It functions in the pathway amino-acid biosynthesis; L-histidine biosynthesis; L-histidine from 5-phospho-alpha-D-ribose 1-diphosphate: step 1/9. Its activity is regulated as follows. Feedback inhibited by histidine. In terms of biological role, catalyzes the condensation of ATP and 5-phosphoribose 1-diphosphate to form N'-(5'-phosphoribosyl)-ATP (PR-ATP). Has a crucial role in the pathway because the rate of histidine biosynthesis seems to be controlled primarily by regulation of HisG enzymatic activity. This Natronomonas pharaonis (strain ATCC 35678 / DSM 2160 / CIP 103997 / JCM 8858 / NBRC 14720 / NCIMB 2260 / Gabara) (Halobacterium pharaonis) protein is ATP phosphoribosyltransferase.